The primary structure comprises 168 residues: Probable chemoreceptor glutamine deamidase CheD (168 aa).

Belongs to the CheD family.

The catalysed reaction is L-glutaminyl-[protein] + H2O = L-glutamyl-[protein] + NH4(+). Functionally, probably deamidates glutamine residues to glutamate on methyl-accepting chemotaxis receptors (MCPs), playing an important role in chemotaxis. This Pseudomonas syringae pv. tomato (strain ATCC BAA-871 / DC3000) protein is Probable chemoreceptor glutamine deamidase CheD.